Reading from the N-terminus, the 216-residue chain is Elongation factor 1-beta (216 aa).

Residues 71–131 form a disordered region; it reads GQASGVSASS…AKKKESGKSS (61 aa). The segment covering 73–89 has biased composition (low complexity); the sequence is ASGVSASSAPAAAAPAA. Over residues 92–107 the composition is skewed to acidic residues; the sequence is DEDDDDDMDLFGDETE. Residues 108 to 128 are compositionally biased toward basic and acidic residues; sequence EDKKAAAEREAAKPAKKKESG.

It belongs to the EF-1-beta/EF-1-delta family. As to quaternary structure, EF-1 is composed of 4 subunits: alpha, beta (1B-alpha=beta'), delta (1B-beta), and gamma (1B-gamma).

In terms of biological role, EF-1-beta and EF-1-beta' stimulate the exchange of GDP bound to EF-1-alpha to GTP. The protein is Elongation factor 1-beta of Triticum aestivum (Wheat).